We begin with the raw amino-acid sequence, 441 residues long: Glutamyl-tRNA reductase (441 aa).

Residues 64 to 67, serine 123, 128 to 130, and glutamine 134 contribute to the substrate site; these read TCNR and ETQ. The Nucleophile role is filled by cysteine 65. 203–208 contacts NADP(+); that stretch reads GAGEMI.

Belongs to the glutamyl-tRNA reductase family. In terms of assembly, homodimer.

It carries out the reaction (S)-4-amino-5-oxopentanoate + tRNA(Glu) + NADP(+) = L-glutamyl-tRNA(Glu) + NADPH + H(+). The protein operates within porphyrin-containing compound metabolism; protoporphyrin-IX biosynthesis; 5-aminolevulinate from L-glutamyl-tRNA(Glu): step 1/2. In terms of biological role, catalyzes the NADPH-dependent reduction of glutamyl-tRNA(Glu) to glutamate 1-semialdehyde (GSA). The chain is Glutamyl-tRNA reductase from Burkholderia pseudomallei (strain K96243).